A 538-amino-acid chain; its full sequence is CTP synthase (538 aa).

The interval 1-265 is amidoligase domain; sequence MARYIFVTGG…DLQVLNYFKL (265 aa). Residue serine 13 participates in CTP binding. Serine 13 serves as a coordination point for UTP. ATP is bound by residues 14–19 and aspartate 71; that span reads SLGKGL. 2 residues coordinate Mg(2+): aspartate 71 and glutamate 139. CTP is bound by residues 146–148, 186–191, and lysine 222; these read DIE and KTKPTQ. UTP contacts are provided by residues 186–191 and lysine 222; that span reads KTKPTQ. In terms of domain architecture, Glutamine amidotransferase type-1 spans 291–538; sequence NIAIIGKYVE…SFIKAAKNHK (248 aa). Residue glycine 353 participates in L-glutamine binding. Cysteine 380 (nucleophile; for glutamine hydrolysis) is an active-site residue. Residues 381–384, glutamate 404, and arginine 468 each bind L-glutamine; that span reads YGMQ. Residues histidine 513 and glutamate 515 contribute to the active site.

This sequence belongs to the CTP synthase family. In terms of assembly, homotetramer.

It catalyses the reaction UTP + L-glutamine + ATP + H2O = CTP + L-glutamate + ADP + phosphate + 2 H(+). It carries out the reaction L-glutamine + H2O = L-glutamate + NH4(+). The enzyme catalyses UTP + NH4(+) + ATP = CTP + ADP + phosphate + 2 H(+). The protein operates within pyrimidine metabolism; CTP biosynthesis via de novo pathway; CTP from UDP: step 2/2. Its activity is regulated as follows. Allosterically activated by GTP, when glutamine is the substrate; GTP has no effect on the reaction when ammonia is the substrate. The allosteric effector GTP functions by stabilizing the protein conformation that binds the tetrahedral intermediate(s) formed during glutamine hydrolysis. Inhibited by the product CTP, via allosteric rather than competitive inhibition. Catalyzes the ATP-dependent amination of UTP to CTP with either L-glutamine or ammonia as the source of nitrogen. Regulates intracellular CTP levels through interactions with the four ribonucleotide triphosphates. This chain is CTP synthase, found in Pelagibacter ubique (strain HTCC1062).